Reading from the N-terminus, the 591-residue chain is Probable translation initiation factor IF-2 (591 aa).

The region spanning 7 to 223 is the tr-type G domain; it reads LRTPIVCVMG…LLGLAQRFLE (217 aa). Residues 16-23 form a G1 region; it reads GHVDHGKT. Position 16 to 23 (16 to 23) interacts with GTP; that stretch reads GHVDHGKT. A G2 region spans residues 41 to 45; the sequence is AITQH. A G3 region spans residues 78-81; sequence DTPG. GTP is bound by residues 78–82 and 132–135; these read DTPGH and NKID. A G4 region spans residues 132 to 135; that stretch reads NKID. The interval 200–202 is G5; it reads SAI.

Belongs to the TRAFAC class translation factor GTPase superfamily. Classic translation factor GTPase family. IF-2 subfamily.

In terms of biological role, function in general translation initiation by promoting the binding of the formylmethionine-tRNA to ribosomes. Seems to function along with eIF-2. This is Probable translation initiation factor IF-2 from Methanococcoides burtonii (strain DSM 6242 / NBRC 107633 / OCM 468 / ACE-M).